We begin with the raw amino-acid sequence, 156 residues long: Small ribosomal subunit protein uS7 (156 aa).

This sequence belongs to the universal ribosomal protein uS7 family. As to quaternary structure, part of the 30S ribosomal subunit. Contacts proteins S9 and S11.

In terms of biological role, one of the primary rRNA binding proteins, it binds directly to 16S rRNA where it nucleates assembly of the head domain of the 30S subunit. Is located at the subunit interface close to the decoding center, probably blocks exit of the E-site tRNA. The polypeptide is Small ribosomal subunit protein uS7 (Tropheryma whipplei (strain TW08/27) (Whipple's bacillus)).